The primary structure comprises 1822 residues: Sperm flagellar protein 2 (1822 aa).

The region spanning 1-105 (MSEILCQWLN…LLYQLYIALQ (105 aa)) is the Calponin-homology (CH) domain. 4 coiled-coil regions span residues 227–260 (KALEAQKMMKKKKEAEDVADEIKKFEALIKKDLQ), 321–396 (AHEA…KQAK), 732–758 (NQAQLLEEALTGCNRNLTEVERKKAQK), and 871–909 (CEKVKEILTTEIAKKKNKVEKKLEEKEAEKKAAASLAEL). Disordered stretches follow at residues 896 to 1004 (KEAE…VPQP), 1278 to 1327 (EEEK…EATP), 1664 to 1718 (SIPS…NNEK), and 1803 to 1822 (EHVQGSDGERSPSRHTEEKK). Over residues 911–920 (LPTPPPAPPP) the composition is skewed to pro residues. Composition is skewed to basic and acidic residues over residues 921-930 (EPEKEKEIHQ) and 949-968 (PHGKQESLQEGKGKKGETAL). A compositionally biased stretch (low complexity) spans 975-987 (KGKSSGGKVPVKK). 2 stretches are compositionally biased toward basic and acidic residues: residues 1278–1292 (EEEKENQPADPKEKS) and 1303–1314 (KEPPKKKQEDKK). The tract at residues 1324-1676 (EATPVIVTTE…SAEKTSSTDA (353 aa)) is interaction with IFT20. Residues 1686 to 1712 (EENAAREERKLKDDTEKREQKDEEIPE) are a coiled coil. Residues 1688–1708 (NAAREERKLKDDTEKREQKDE) are compositionally biased toward basic and acidic residues.

Interacts (via C-terminus) with IFT20. Interacts with DYNC1I2.

The protein localises to the cell projection. It is found in the cilium. Its subcellular location is the flagellum. It localises to the cytoplasm. The protein resides in the golgi apparatus. In terms of biological role, required for correct axoneme development in spermatozoa. Important for normal development of the manchette and sperm head morphology. Essential for male fertility. Plays a role in localization of the intraflagellar transport protein IFT20 to the manchette, suggesting function as an adapter for dynein-mediated protein transport during spermatogenesis. Also plays a role in bone growth where it seems to be required for normal osteoblast differentiation. The sequence is that of Sperm flagellar protein 2 (SPEF2) from Homo sapiens (Human).